Here is a 251-residue protein sequence, read N- to C-terminus: 5-oxoprolinase subunit A (251 aa).

This sequence belongs to the LamB/PxpA family. As to quaternary structure, forms a complex composed of PxpA, PxpB and PxpC.

The catalysed reaction is 5-oxo-L-proline + ATP + 2 H2O = L-glutamate + ADP + phosphate + H(+). Its function is as follows. Catalyzes the cleavage of 5-oxoproline to form L-glutamate coupled to the hydrolysis of ATP to ADP and inorganic phosphate. This Vibrio campbellii (strain ATCC BAA-1116) protein is 5-oxoprolinase subunit A.